The sequence spans 141 residues: Nucleoside triphosphatase NudI (141 aa).

Positions 1–141 (MRQRTIVCPL…RKTLSLKGLL (141 aa)) constitute a Nudix hydrolase domain. Positions 38–59 (GGVEPGERIEDALRREIREELG) match the Nudix box motif.

The protein belongs to the Nudix hydrolase family. NudI subfamily. In terms of assembly, monomer. The cofactor is Mg(2+).

It catalyses the reaction a ribonucleoside 5'-triphosphate + H2O = a ribonucleoside 5'-phosphate + diphosphate + H(+). The catalysed reaction is a 2'-deoxyribonucleoside 5'-triphosphate + H2O = a 2'-deoxyribonucleoside 5'-phosphate + diphosphate + H(+). The enzyme catalyses dUTP + H2O = dUMP + diphosphate + H(+). It carries out the reaction dTTP + H2O = dTMP + diphosphate + H(+). It catalyses the reaction dCTP + H2O = dCMP + diphosphate + H(+). Catalyzes the hydrolysis of nucleoside triphosphates, with a preference for pyrimidine deoxynucleoside triphosphates (dUTP, dTTP and dCTP). This is Nucleoside triphosphatase NudI from Escherichia fergusonii (strain ATCC 35469 / DSM 13698 / CCUG 18766 / IAM 14443 / JCM 21226 / LMG 7866 / NBRC 102419 / NCTC 12128 / CDC 0568-73).